The primary structure comprises 445 residues: Tubulin beta-2 chain (445 aa).

An MREI motif motif is present at residues Met-1–Ile-4. Positions 11, 69, 138, 142, 143, 144, 204, and 226 each coordinate GTP. Residue Glu-69 participates in Mg(2+) binding. Positions Gln-424–Ala-445 are disordered. The span at Thr-429–Ala-445 shows a compositional bias: acidic residues. A 5-glutamyl polyglutamate modification is found at Glu-438.

This sequence belongs to the tubulin family. In terms of assembly, dimer of alpha and beta chains. A typical microtubule is a hollow water-filled tube with an outer diameter of 25 nm and an inner diameter of 15 nM. Alpha-beta heterodimers associate head-to-tail to form protofilaments running lengthwise along the microtubule wall with the beta-tubulin subunit facing the microtubule plus end conferring a structural polarity. Microtubules usually have 13 protofilaments but different protofilament numbers can be found in some organisms and specialized cells. Mg(2+) is required as a cofactor. In terms of processing, some glutamate residues at the C-terminus are polyglycylated, resulting in polyglycine chains on the gamma-carboxyl group. Glycylation is mainly limited to tubulin incorporated into axonemes (cilia and flagella) whereas glutamylation is prevalent in neuronal cells, centrioles, axonemes, and the mitotic spindle. Both modifications can coexist on the same protein on adjacent residues, and lowering polyglycylation levels increases polyglutamylation, and reciprocally. The precise function of polyglycylation is still unclear. Post-translationally, some glutamate residues at the C-terminus are polyglutamylated, resulting in polyglutamate chains on the gamma-carboxyl group. Polyglutamylation plays a key role in microtubule severing by spastin (SPAST). SPAST preferentially recognizes and acts on microtubules decorated with short polyglutamate tails: severing activity by SPAST increases as the number of glutamates per tubulin rises from one to eight, but decreases beyond this glutamylation threshold. As to expression, highly expressed in neuronal cells.

The protein resides in the cytoplasm. It is found in the cytoskeleton. Its function is as follows. Tubulin is the major constituent of microtubules, a cylinder consisting of laterally associated linear protofilaments composed of alpha- and beta-tubulin heterodimers. Microtubules grow by the addition of GTP-tubulin dimers to the microtubule end, where a stabilizing cap forms. Below the cap, tubulin dimers are in GDP-bound state, owing to GTPase activity of alpha-tubulin. This Gallus gallus (Chicken) protein is Tubulin beta-2 chain.